Here is a 230-residue protein sequence, read N- to C-terminus: Small ribosomal subunit protein uS3 (230 aa).

The KH type-2 domain occupies Val-39 to Arg-107.

The protein belongs to the universal ribosomal protein uS3 family. Part of the 30S ribosomal subunit. Forms a tight complex with proteins S10 and S14.

Functionally, binds the lower part of the 30S subunit head. Binds mRNA in the 70S ribosome, positioning it for translation. The chain is Small ribosomal subunit protein uS3 from Shewanella baltica (strain OS223).